We begin with the raw amino-acid sequence, 674 residues long: Methionine--tRNA ligase (674 aa).

The short motif at 12–22 (PYANGPIHLGH) is the 'HIGH' region element. Zn(2+)-binding residues include C143, C146, C156, and C159. The 'KMSKS' region signature appears at 328 to 332 (KMSKS). K331 lines the ATP pocket. The tRNA-binding domain occupies 573–674 (SFAKLDLRIA…EGARPGMRVK (102 aa)).

Belongs to the class-I aminoacyl-tRNA synthetase family. MetG type 1 subfamily. Homodimer. Zn(2+) serves as cofactor.

Its subcellular location is the cytoplasm. It catalyses the reaction tRNA(Met) + L-methionine + ATP = L-methionyl-tRNA(Met) + AMP + diphosphate. Is required not only for elongation of protein synthesis but also for the initiation of all mRNA translation through initiator tRNA(fMet) aminoacylation. This is Methionine--tRNA ligase from Nitrosococcus oceani (strain ATCC 19707 / BCRC 17464 / JCM 30415 / NCIMB 11848 / C-107).